A 392-amino-acid polypeptide reads, in one-letter code: Dual-specificity RNA methyltransferase RlmN (392 aa).

The active-site Proton acceptor is Glu116. The 243-residue stretch at Glu122–Asp364 folds into the Radical SAM core domain. A disulfide bond links Cys129 and Cys369. [4Fe-4S] cluster is bound by residues Cys136, Cys140, and Cys143. Residues Gly195 to Glu196, Ser227, Ser249 to His251, and Asn326 each bind S-adenosyl-L-methionine. Catalysis depends on Cys369, which acts as the S-methylcysteine intermediate.

It belongs to the radical SAM superfamily. RlmN family. The cofactor is [4Fe-4S] cluster.

It is found in the cytoplasm. It catalyses the reaction adenosine(2503) in 23S rRNA + 2 reduced [2Fe-2S]-[ferredoxin] + 2 S-adenosyl-L-methionine = 2-methyladenosine(2503) in 23S rRNA + 5'-deoxyadenosine + L-methionine + 2 oxidized [2Fe-2S]-[ferredoxin] + S-adenosyl-L-homocysteine. It carries out the reaction adenosine(37) in tRNA + 2 reduced [2Fe-2S]-[ferredoxin] + 2 S-adenosyl-L-methionine = 2-methyladenosine(37) in tRNA + 5'-deoxyadenosine + L-methionine + 2 oxidized [2Fe-2S]-[ferredoxin] + S-adenosyl-L-homocysteine. Its function is as follows. Specifically methylates position 2 of adenine 2503 in 23S rRNA and position 2 of adenine 37 in tRNAs. m2A2503 modification seems to play a crucial role in the proofreading step occurring at the peptidyl transferase center and thus would serve to optimize ribosomal fidelity. The protein is Dual-specificity RNA methyltransferase RlmN of Cereibacter sphaeroides (strain ATCC 17029 / ATH 2.4.9) (Rhodobacter sphaeroides).